A 275-amino-acid chain; its full sequence is Apoptosis inhibitor 1 (275 aa).

BIR repeat units lie at residues 24–91 (LIER…CVYA) and 126–193 (PSAR…CYFV). Positions 163, 166, 183, and 190 each coordinate Zn(2+). The segment at 227-263 (CKVCLERQRDAVLLPCRHFCVCMQCYFALDGKCPTCR) adopts an RING-type zinc-finger fold.

Functionally, acts by blocking cellular apoptosis rather than by preventing viral stimulation of apoptosis. This Orgyia pseudotsugata (Douglas-fir tussock moth) protein is Apoptosis inhibitor 1 (IAP1).